The following is a 98-amino-acid chain: DNA-directed RNA polymerase subunit Rpo11 (98 aa).

Belongs to the archaeal Rpo11/eukaryotic RPB11/RPC19 RNA polymerase subunit family. In terms of assembly, part of the RNA polymerase complex.

It localises to the cytoplasm. The enzyme catalyses RNA(n) + a ribonucleoside 5'-triphosphate = RNA(n+1) + diphosphate. DNA-dependent RNA polymerase (RNAP) catalyzes the transcription of DNA into RNA using the four ribonucleoside triphosphates as substrates. The protein is DNA-directed RNA polymerase subunit Rpo11 of Korarchaeum cryptofilum (strain OPF8).